Here is a 367-residue protein sequence, read N- to C-terminus: Alginate lyase (367 aa).

The signal sequence occupies residues 1-24; sequence MTLLKRISSPALLALALFGGAAHA. Residues 63–64, 136–137, and Tyr-254 each bind substrate; these read SK and HT.

It belongs to the polysaccharide lyase 5 family.

The protein localises to the periplasm. The catalysed reaction is Eliminative cleavage of alginate to give oligosaccharides with 4-deoxy-alpha-L-erythro-hex-4-enuronosyl groups at their non-reducing ends and beta-D-mannuronate at their reducing end.. Catalyzes the depolymerization of alginate by cleaving the beta-1,4 glycosidic bond between two adjacent sugar residues via a beta-elimination mechanism. May serve to degrade mislocalized alginate that is trapped in the periplasmic space. This is Alginate lyase from Pseudomonas putida (strain GB-1).